The chain runs to 346 residues: MALLKVKFDQKKRVKLAQGLWLMNWLSVLAGIVLFSLGLFLKIELRKRSDVMDNSESHFVPNSLIGVGVLSCVFNSLAGKICYDALDPAKYAKWKPWLKLYLAVCVFFNVILFLVALCCFLLRGSLESTLAYGLKNGMKYYRDTDTPGRCFMKKTIDMLQIEFKCCGNNGFRDWFEIQWISNRYLDFSSKEVKDRIKSNVDGRYLVDGVPFSCCNPSSPRPCIQYQLTNNSAHYSYDHQTEELNLWLRGCRAALLNYYSSLMNSMGVVTLLIWLFEVSITAGLRFLHTALESVSNPEDPECESEGWLLENSVSETWKAFLESFKKLGKSNQVEAEAADAGQAPEAG.

Residues methionine 1 to asparagine 24 lie on the Cytoplasmic side of the membrane. A helical transmembrane segment spans residues tryptophan 25–isoleucine 43. The Lumenal portion of the chain corresponds to glutamate 44–proline 61. A helical transmembrane segment spans residues asparagine 62–lysine 80. Over isoleucine 81–lysine 99 the chain is Cytoplasmic. The helical transmembrane segment at leucine 100–arginine 123 threads the bilayer. At glycine 124–serine 264 the chain is on the lumenal side. Asparagine 229 is a glycosylation site (N-linked (GlcNAc...) asparagine). A helical transmembrane segment spans residues methionine 265–leucine 290. Topologically, residues glutamate 291–glycine 346 are cytoplasmic. Positions glutamine 341–glycine 346 are interaction with MREG.

The protein belongs to the PRPH2/ROM1 family. In terms of assembly, homodimer; disulfide-linked. Forms a homotetramer. Forms a heterotetramer with ROM1. Homotetramer and heterotetramer core complexes go on to form higher order complexes by formation of intermolecular disulfide bonds. Interacts with MREG. Interacts with STX3. Interacts with SNAP25. In terms of tissue distribution, retina (photoreceptor). In rim region of ROS (rod outer segment) disks.

Its subcellular location is the membrane. The protein resides in the cell projection. It localises to the cilium. It is found in the photoreceptor outer segment. The protein localises to the photoreceptor inner segment. Essential for retina photoreceptor outer segment disk morphogenesis, may also play a role with ROM1 in the maintenance of outer segment disk structure. Required for the maintenance of retinal outer nuclear layer thickness. Required for the correct development and organization of the photoreceptor inner segment. This Rattus norvegicus (Rat) protein is Peripherin-2 (Prph2).